The primary structure comprises 552 residues: MGRQVPSESLSLSEGCEVEISYKNNGNESVWYKAILEAKPNSIFKEELSVRLLKDDFSTPLNELRHKVLIRPIPPTNVQACIDIEIGTFVDADYKDAWWAGFVVKVIDDDKFWVCFDSPPDIIQFDRNHLRPTLEWVDEKIYSWWIIGSTRNSEFLKRLAEEPMFSPGTIVELCSKRDEGEVVWVPALVYKEFKENDEYRYIVKDKPLIGRSYKSRPSKTVDLRSLRPIPPPIRVKEYRLDEYIEVYHDGIGWRQGRVVKSEGGVMGSLFQNWCTLLLEATKKQLMFKQSDLRPLRVWEDGVWKTRESSLTQGSGDKTEVETQRKTFPKKTLPRNQNGSGNDSTLENENSNRKRKREENLCSGSSVEETNILFEKKLPVWKILESMEVFKTIPQSPHFRPLAEIREDSREMLAVGMMLTFSCLLEQVKALQHDEARSSFISLSNSFAELEKHGFNAQVAQLRINKLLTLRGMQSRKMDELKGAKKVTAEKESVKVENERKILELQRLNEEMAKEIAQSMSCEGKILQQLDNMKLEFQATASAPWPKWAFRST.

A disordered region spans residues 308-361 (SSLTQGSGDKTEVETQRKTFPKKTLPRNQNGSGNDSTLENENSNRKRKREENLC). Residues 333–348 (PRNQNGSGNDSTLENE) are compositionally biased toward polar residues. The region spanning 371-543 (ILFEKKLPVW…LEFQATASAP (173 aa)) is the DUF724 domain.

Expressed at low levels in leaves, stems, flowers and siliques.

May be involved in the polar growth of plant cells via transportation of RNAs. This chain is DUF724 domain-containing protein 10, found in Arabidopsis thaliana (Mouse-ear cress).